Here is a 246-residue protein sequence, read N- to C-terminus: Aspartate/glutamate leucyltransferase (246 aa).

This sequence belongs to the R-transferase family. Bpt subfamily.

The protein localises to the cytoplasm. It carries out the reaction N-terminal L-glutamyl-[protein] + L-leucyl-tRNA(Leu) = N-terminal L-leucyl-L-glutamyl-[protein] + tRNA(Leu) + H(+). The enzyme catalyses N-terminal L-aspartyl-[protein] + L-leucyl-tRNA(Leu) = N-terminal L-leucyl-L-aspartyl-[protein] + tRNA(Leu) + H(+). Its function is as follows. Functions in the N-end rule pathway of protein degradation where it conjugates Leu from its aminoacyl-tRNA to the N-termini of proteins containing an N-terminal aspartate or glutamate. The polypeptide is Aspartate/glutamate leucyltransferase (Rhodospirillum rubrum (strain ATCC 11170 / ATH 1.1.1 / DSM 467 / LMG 4362 / NCIMB 8255 / S1)).